The primary structure comprises 215 residues: MHRDAWLPRPAFSLTGLSLFFSLVPPGRSMEVTVPATLNVLNGSDARLPCTFNSCYTVNHKQFSLNWTYQECNNCSEEMFLQFRMKIINLKLERFQDRVEFSGNPSKYDVSVMLRNVQPEDEGIYNCYIMNPPDRHRGHGKIHLQVLMEEPPERDSTVAVIVGASVGGFLAVVILVLMVVKCVRRKKEQKLSTDDLKTEEEGKTDGEGNPDDGAK.

The first 29 residues, 1-29 (MHRDAWLPRPAFSLTGLSLFFSLVPPGRS), serve as a signal peptide directing secretion. Topologically, residues 30 to 157 (MEVTVPATLN…MEEPPERDST (128 aa)) are extracellular. The 123-residue stretch at 32-154 (VTVPATLNVL…QVLMEEPPER (123 aa)) folds into the Ig-like C2-type domain. Residues Asn42, Asn66, and Asn74 are each glycosylated (N-linked (GlcNAc...) asparagine). Cystine bridges form between Cys50–Cys127 and Cys72–Cys75. A helical membrane pass occupies residues 158-179 (VAVIVGASVGGFLAVVILVLMV). The Cytoplasmic portion of the chain corresponds to 180–215 (VKCVRRKKEQKLSTDDLKTEEEGKTDGEGNPDDGAK). The tract at residues 187-215 (KEQKLSTDDLKTEEEGKTDGEGNPDDGAK) is disordered. The segment covering 189-215 (QKLSTDDLKTEEEGKTDGEGNPDDGAK) has biased composition (basic and acidic residues). Ser192 carries the post-translational modification Phosphoserine. At Thr204 the chain carries Phosphothreonine.

This sequence belongs to the sodium channel auxiliary subunit SCN2B (TC 8.A.17) family. As to quaternary structure, a voltage-gated sodium (Nav) channel consists of an ion-conducting pore-forming alpha subunit functional on its own that is regulated by one or more beta subunits. The beta subunit SCN2B is disulfide-linked to the pore-forming alpha subunit. Interacts with SCN1A; regulatory subunit of SCN1A/Nav1.1. Interacts with SCN2A; regulatory subunit of SCN2A/Nav1.2. Interacts with SCN3A; regulatory subunit of SCN3A/Nav1.3. Interacts with SCN5A; regulatory subunit of SCN5A/Nav1.5. Interacts with SCN8A; regulatory subunit of SCN8A/Nav1.6. Interacts with SCN9A; regulatory subunit of SCN9A/Nav1.7. Interacts with SCN10A; regulatory subunit of SCN10A/Nav1.8. Interacts with TNR; may play a crucial role in clustering and regulation of activity of SCN2B-containing Nav channels at nodes of Ranvier.

It localises to the cell membrane. It is found in the cell projection. The protein resides in the axon. Its function is as follows. Regulatory subunit of multiple voltage-gated sodium (Nav) channels directly mediating the depolarization of excitable membranes. Navs, also called VGSCs (voltage-gated sodium channels) or VDSCs (voltage-dependent sodium channels), operate by switching between closed and open conformations depending on the voltage difference across the membrane. In the open conformation they allow Na(+) ions to selectively pass through the pore, along their electrochemical gradient. The influx of Na+ ions provokes membrane depolarization, initiating the propagation of electrical signals throughout cells and tissues. The accessory beta subunits participate in localization and functional modulation of the Nav channels. Modulates the activity of SCN1A/Nav1.1, SCN2A/Nav1.2, SCN2A/Nav1.3, SCN5A/Nav1.5, SCN8A/Nav1.6, SCN9A/Nav1.7 and SCN10A/Nav1.8. The chain is Sodium channel regulatory subunit beta-2 from Homo sapiens (Human).